Here is a 476-residue protein sequence, read N- to C-terminus: Proline--tRNA ligase (476 aa).

The protein belongs to the class-II aminoacyl-tRNA synthetase family. ProS type 3 subfamily. In terms of assembly, homodimer.

The protein localises to the cytoplasm. It catalyses the reaction tRNA(Pro) + L-proline + ATP = L-prolyl-tRNA(Pro) + AMP + diphosphate. In terms of biological role, catalyzes the attachment of proline to tRNA(Pro) in a two-step reaction: proline is first activated by ATP to form Pro-AMP and then transferred to the acceptor end of tRNA(Pro). In Mycoplasma mobile (strain ATCC 43663 / 163K / NCTC 11711) (Mesomycoplasma mobile), this protein is Proline--tRNA ligase.